Reading from the N-terminus, the 115-residue chain is Thioredoxin-1 (115 aa).

Residues Leu-2–Ala-114 enclose the Thioredoxin domain. Catalysis depends on nucleophile residues Cys-39 and Cys-42. Cys-39 and Cys-42 are oxidised to a cystine.

The protein belongs to the thioredoxin family. In terms of tissue distribution, expressed in ASJ and ASI ciliated sensory neurons. Expressed in the intestine (at protein level).

Functionally, participates in various redox reactions through the reversible oxidation of its active center dithiol to a disulfide and catalyzes dithiol-disulfide exchange reactions. Shown to facilitate the reduction of insulin disulfide bonds. Might play a role in the reversible nitrosylation of cysteine residues in target proteins, and thereby contributing to the response to intracellular nitric oxide. Shapes the ASJ sensory neuron biphasic response to nitric oxide (NO) exposure; trans-nitrosylation activity might inhibit calcium flux to the cytoplasm in ASJ neurons when exposed to a NO stimulus, whereas de-nitrosylation activity might promote calcium flux when NO is diminished. By regulating the NO-induced ASJ sensory neuron activity, mediates the avoidance response to NO-producing organisms like P.aeruginosa. Positively regulates life span extension under normal and caloric restriction conditions, dauer formation and the oxidative stress response. Contributes to the down-regulation of expression of the insulin-like neuropeptide daf-28 in the ASJ neurons in a redox-independent fashion, thereby promoting dauer formation. Negatively regulates the nuclear localization of the intestinal skn-1 transcription factor in a p38 MAPK pathway-dependent and redox-independent fashion. The polypeptide is Thioredoxin-1 (trx-1) (Caenorhabditis elegans).